We begin with the raw amino-acid sequence, 723 residues long: Translation initiation factor IF-2 (723 aa).

The tract at residues 112–138 (KIFNNKKNKKQKPQQAPQQEVQKKKEK) is disordered. Over residues 114–123 (FNNKKNKKQK) the composition is skewed to basic residues. Residues 224-393 (ERPPVVTIMG…LLVSEMEELK (170 aa)) form the tr-type G domain. Residues 233–240 (GHVDHGKT) are G1. Residue 233–240 (GHVDHGKT) participates in GTP binding. The tract at residues 258-262 (GITQH) is G2. The segment at 279 to 282 (DTPG) is G3. GTP contacts are provided by residues 279–283 (DTPGH) and 333–336 (NKID). The interval 333 to 336 (NKID) is G4. A G5 region spans residues 369 to 371 (SAL).

It belongs to the TRAFAC class translation factor GTPase superfamily. Classic translation factor GTPase family. IF-2 subfamily.

It localises to the cytoplasm. One of the essential components for the initiation of protein synthesis. Protects formylmethionyl-tRNA from spontaneous hydrolysis and promotes its binding to the 30S ribosomal subunits. Also involved in the hydrolysis of GTP during the formation of the 70S ribosomal complex. This Anoxybacillus flavithermus (strain DSM 21510 / WK1) protein is Translation initiation factor IF-2.